The following is a 422-amino-acid chain: tRNA(Met) cytidine acetate ligase (422 aa).

ATP-binding positions include 7–20 (ITEY…HLYH), Gly102, Asn172, and Arg197.

This sequence belongs to the TmcAL family.

It localises to the cytoplasm. The catalysed reaction is cytidine(34) in elongator tRNA(Met) + acetate + ATP = N(4)-acetylcytidine(34) in elongator tRNA(Met) + AMP + diphosphate. In terms of biological role, catalyzes the formation of N(4)-acetylcytidine (ac(4)C) at the wobble position of elongator tRNA(Met), using acetate and ATP as substrates. First activates an acetate ion to form acetyladenylate (Ac-AMP) and then transfers the acetyl group to tRNA to form ac(4)C34. This chain is tRNA(Met) cytidine acetate ligase, found in Halothermothrix orenii (strain H 168 / OCM 544 / DSM 9562).